The following is a 757-amino-acid chain: Protein lsd90 (757 aa).

Polar residues-rich tracts occupy residues 1 to 11 (MVGTINESMQN), 19 to 36 (TAQSAKQGIKNAGQSSSK), 51 to 69 (TAGNTANDGDSSYASSKNL), and 94 to 118 (DTSNVSPPSTQTGGYASKDTTSTYE). 4 disordered regions span residues 1–131 (MVGT…SRSS), 224–244 (ERAREAQSSIERSASLREKQA), 589–633 (AQAE…KSKS), and 657–757 (AYVG…MSNK). A coiled-coil region spans residues 166-604 (DEKTLQDLLE…KVESEYNSVK (439 aa)). The segment covering 589–598 (AQAEQSKVES) has biased composition (basic and acidic residues). Polar residues predominate over residues 619–632 (VTTNEPTDVSTKSK). A compositionally biased stretch (low complexity) spans 674–693 (STPSTLPTSASTNAAATTTT). 718–725 (GTTGLGKS) serves as a coordination point for ATP.

Functionally, may be involved in the metabolism of very long-chain fatty acid-containing phospholipids (VLCFA-PL). The protein is Protein lsd90 (lsd90) of Schizosaccharomyces pombe (strain 972 / ATCC 24843) (Fission yeast).